Consider the following 91-residue polypeptide: Non-specific lipid-transfer protein 1 (91 aa).

4 disulfides stabilise this stretch: C3-C50, C13-C27, C28-C73, and C48-C87.

Belongs to the plant LTP family.

Its function is as follows. Plant non-specific lipid-transfer proteins transfer phospholipids as well as galactolipids across membranes. May play a role in wax or cutin deposition in the cell walls of expanding epidermal cells and certain secretory tissues. The protein is Non-specific lipid-transfer protein 1 of Prunus armeniaca (Apricot).